A 323-amino-acid chain; its full sequence is Viral cathepsin (323 aa).

An N-terminal signal peptide occupies residues 1-16 (MNKILFYLFVYAVVKS). Residues 17–112 (AAYDPLKAPN…ILLDQPPGKG (96 aa)) constitute a propeptide, activation peptide. Cystine bridges form between C133/C174, C167/C207, and C262/C310. C136 is a catalytic residue. N158 carries an N-linked (GlcNAc...) asparagine; by host glycan. Active-site residues include H269 and N289.

Belongs to the peptidase C1 family. In terms of processing, synthesized as an inactive proenzyme and activated by proteolytic removal of the inhibitory propeptide.

It catalyses the reaction Endopeptidase of broad specificity, hydrolyzing substrates of both cathepsin L and cathepsin B.. Functionally, cysteine protease that plays an essential role in host liquefaction to facilitate horizontal transmission of the virus. May participate in the degradation of foreign protein expressed by the baculovirus system. The chain is Viral cathepsin (VCATH) from Bombyx mori (Silk moth).